The following is a 541-amino-acid chain: MPKIIAYEEEARRGLERGMNQLAGAVKVTLGPKGRNVVLEKKWGVPAITNDGVSIAREIELEDPYEKIGAEMVKEVAKKTDEVAGDGTTTATVLAEALVHEGLRNVAAGANPIALKRGIELAVERVCGELANLSRELETKDQIASTASISAGGDTAIGQIIAEAMDKVGRDGVITVEESNTFGLELELTEGMRFDKGYISPYFITDQERMECVLEDPYILVANIKISLVKDLLPLLEKVMQAGRPLLVIAENVEGEALATLVVNKIRGTFRSVAVKAPGFGERRKAMLGDIAVLTGSQVISEEVGLRLENADLDLLGRARKVVVTKDDTTIIEGAGDPGRIAGRVSQIRSEIEKSDSDYDREKLQERLARLAGGVAVIKAGAATEVELKERKHRIEDAVRNAKAAVEEGIVPGGGVALLLASGAVFDGLEVAEDERTGAEMVRRALTEPLRQIAVNAGLEGGVVVEKVRNLQPGWGLDAATGEHVNMLEAGIIDPTKVTRSALQNAASIAGLFLTTEAVVAEKPEEKETAAAPAGGGGLEY.

ATP contacts are provided by residues 29 to 32 (TLGP), 86 to 90 (DGTTT), G414, 478 to 480 (DAA), and D494.

Belongs to the chaperonin (HSP60) family. As to quaternary structure, forms a cylinder of 14 subunits composed of two heptameric rings stacked back-to-back. Interacts with the co-chaperonin GroES.

The protein resides in the cytoplasm. The catalysed reaction is ATP + H2O + a folded polypeptide = ADP + phosphate + an unfolded polypeptide.. Its function is as follows. Together with its co-chaperonin GroES, plays an essential role in assisting protein folding. The GroEL-GroES system forms a nano-cage that allows encapsulation of the non-native substrate proteins and provides a physical environment optimized to promote and accelerate protein folding. This chain is Chaperonin GroEL 2, found in Frankia casuarinae (strain DSM 45818 / CECT 9043 / HFP020203 / CcI3).